Here is a 598-residue protein sequence, read N- to C-terminus: Aspartate--tRNA(Asp/Asn) ligase (598 aa).

An L-aspartate-binding site is contributed by Glu172. An aspartate region spans residues 196-199 (QLFK). L-aspartate is bound at residue Arg218. Residues 218 to 220 (RDE) and Gln227 contribute to the ATP site. L-aspartate is bound at residue His454. Position 488 (Glu488) interacts with ATP. Arg495 is a binding site for L-aspartate. 540–543 (GLDR) serves as a coordination point for ATP.

Belongs to the class-II aminoacyl-tRNA synthetase family. Type 1 subfamily. In terms of assembly, homodimer.

The protein localises to the cytoplasm. The enzyme catalyses tRNA(Asx) + L-aspartate + ATP = L-aspartyl-tRNA(Asx) + AMP + diphosphate. Aspartyl-tRNA synthetase with relaxed tRNA specificity since it is able to aspartylate not only its cognate tRNA(Asp) but also tRNA(Asn). Reaction proceeds in two steps: L-aspartate is first activated by ATP to form Asp-AMP and then transferred to the acceptor end of tRNA(Asp/Asn). This chain is Aspartate--tRNA(Asp/Asn) ligase, found in Leptothrix cholodnii (strain ATCC 51168 / LMG 8142 / SP-6) (Leptothrix discophora (strain SP-6)).